A 332-amino-acid chain; its full sequence is Caffeoylshikimate esterase (332 aa).

Residues methionine 1 to proline 13 are compositionally biased toward low complexity. A disordered region spans residues methionine 1–methionine 26. The active-site Nucleophile is the serine 147. Residues aspartate 268 and histidine 298 each act as charge relay system in the active site.

It belongs to the AB hydrolase superfamily. Monoacylglycerol lipase family. As to quaternary structure, interacts with ACBP2. As to expression, expressed in vasculature of roots and leaves, stems, flowers and siliques.

It is found in the cell membrane. It carries out the reaction 5-O-[(E)-caffeoyl]-shikimate + H2O = shikimate + (E)-caffeate + H(+). Functionally, esterase involved in the biosynthesis of lignin. Hydrolyzes caffeoylshikimate into caffeate and shikimate. Together with 4-coumarate--CoA ligase (4CL), acts on an alternative reaction for the formation of caffeoyl-CoA and bypasses the second reaction of shikimate O-hydroxycinnamoyltransferase (HST). Also accepts 4-coumaroylshikimate as substrate, but with lower activity. According to PubMed:20345607 and PubMed:22915575, possesses monoacylglycerol O-acyltransferase, monoacylglycerol lipase and lysophospholipase activities in vitro. With the association of ACBP2, may promote the degradation of lysophosphatidylcholine and detoxify the peroxidized membrane in response to cadmium-induced oxidative stress. However these results require additional confirmation in vivo. The chain is Caffeoylshikimate esterase (CSE) from Arabidopsis thaliana (Mouse-ear cress).